Reading from the N-terminus, the 241-residue chain is Triosephosphate isomerase (241 aa).

Position 8–10 (8–10 (NWK)) interacts with substrate. The active-site Electrophile is H93. E163 functions as the Proton acceptor in the catalytic mechanism. Substrate is bound by residues G169, S205, and 226–227 (GG).

Belongs to the triosephosphate isomerase family. In terms of assembly, homodimer.

The protein resides in the cytoplasm. The enzyme catalyses D-glyceraldehyde 3-phosphate = dihydroxyacetone phosphate. The protein operates within carbohydrate biosynthesis; gluconeogenesis. It functions in the pathway carbohydrate degradation; glycolysis; D-glyceraldehyde 3-phosphate from glycerone phosphate: step 1/1. Involved in the gluconeogenesis. Catalyzes stereospecifically the conversion of dihydroxyacetone phosphate (DHAP) to D-glyceraldehyde-3-phosphate (G3P). The protein is Triosephosphate isomerase of Bdellovibrio bacteriovorus (strain ATCC 15356 / DSM 50701 / NCIMB 9529 / HD100).